Here is a 938-residue protein sequence, read N- to C-terminus: Isoleucine--tRNA ligase (938 aa).

The 'HIGH' region motif lies at 58–68; sequence PYANGSIHIGH. Position 183 is an N6-acetyllysine (Lys-183). Position 561 (Glu-561) interacts with L-isoleucyl-5'-AMP. The short motif at 602-606 is the 'KMSKS' region element; it reads KMSKS. ATP is bound at residue Lys-605. 4 residues coordinate Zn(2+): Cys-901, Cys-904, Cys-921, and Cys-924.

Belongs to the class-I aminoacyl-tRNA synthetase family. IleS type 1 subfamily. As to quaternary structure, monomer. The cofactor is Zn(2+).

It localises to the cytoplasm. The catalysed reaction is tRNA(Ile) + L-isoleucine + ATP = L-isoleucyl-tRNA(Ile) + AMP + diphosphate. Catalyzes the attachment of isoleucine to tRNA(Ile). As IleRS can inadvertently accommodate and process structurally similar amino acids such as valine, to avoid such errors it has two additional distinct tRNA(Ile)-dependent editing activities. One activity is designated as 'pretransfer' editing and involves the hydrolysis of activated Val-AMP. The other activity is designated 'posttransfer' editing and involves deacylation of mischarged Val-tRNA(Ile). The chain is Isoleucine--tRNA ligase from Escherichia coli O45:K1 (strain S88 / ExPEC).